The chain runs to 111 residues: Ferredoxin-thioredoxin reductase, catalytic chain (111 aa).

Cys52 contacts [4Fe-4S] cluster. The active-site Nucleophile is Cys54. A disulfide bridge connects residues Cys54 and Cys84. Residues Cys71, Cys73, and Cys82 each contribute to the [4Fe-4S] cluster site.

This sequence belongs to the ferredoxin thioredoxin reductase beta subunit family. In terms of assembly, heterodimer of subunit A (variable subunit) and subunit B (catalytic subunit). Heterodimeric FTR forms a complex with ferredoxin and thioredoxin. The cofactor is [4Fe-4S] cluster.

It is found in the plastid. The protein resides in the chloroplast. The catalysed reaction is [thioredoxin]-disulfide + 2 reduced [2Fe-2S]-[ferredoxin] + 2 H(+) = [thioredoxin]-dithiol + 2 oxidized [2Fe-2S]-[ferredoxin]. Functionally, catalytic subunit of the ferredoxin-thioredoxin reductase (FTR), which catalyzes the two-electron reduction of thioredoxins by the electrons provided by reduced ferredoxin. The polypeptide is Ferredoxin-thioredoxin reductase, catalytic chain (ftrB) (Cyanidium caldarium (Red alga)).